A 379-amino-acid chain; its full sequence is Cytochrome b (379 aa).

The next 4 helical transmembrane spans lie at 33–53 (FGSL…FLAM), 77–98 (WLIR…FIHV), 113–133 (WNIG…GYVL), and 178–198 (FFAF…VHLL). Positions 83 and 97 each coordinate heme b. Heme b-binding residues include His-182 and His-196. His-201 is a binding site for a ubiquinone. Transmembrane regions (helical) follow at residues 226 to 246 (IKDL…ALFF), 288 to 308 (LGGV…PLLN), 320 to 340 (VTQT…WIGG), and 347 to 367 (FTTI…ILIP).

Belongs to the cytochrome b family. In terms of assembly, the cytochrome bc1 complex contains 11 subunits: 3 respiratory subunits (MT-CYB, CYC1 and UQCRFS1), 2 core proteins (UQCRC1 and UQCRC2) and 6 low-molecular weight proteins (UQCRH/QCR6, UQCRB/QCR7, UQCRQ/QCR8, UQCR10/QCR9, UQCR11/QCR10 and a cleavage product of UQCRFS1). This cytochrome bc1 complex then forms a dimer. The cofactor is heme b.

It is found in the mitochondrion inner membrane. Its function is as follows. Component of the ubiquinol-cytochrome c reductase complex (complex III or cytochrome b-c1 complex) that is part of the mitochondrial respiratory chain. The b-c1 complex mediates electron transfer from ubiquinol to cytochrome c. Contributes to the generation of a proton gradient across the mitochondrial membrane that is then used for ATP synthesis. The chain is Cytochrome b (MT-CYB) from Akodon lindberghi (Lindbergh's grass mouse).